The chain runs to 79 residues: Putative membrane protein insertion efficiency factor (79 aa).

It belongs to the UPF0161 family.

The protein resides in the cell inner membrane. In terms of biological role, could be involved in insertion of integral membrane proteins into the membrane. In Thermotoga neapolitana (strain ATCC 49049 / DSM 4359 / NBRC 107923 / NS-E), this protein is Putative membrane protein insertion efficiency factor.